We begin with the raw amino-acid sequence, 167 residues long: uncharacterized protein (167 aa).

Residues 1 to 25 form the signal peptide; it reads MPFSVTKFSLIFVALLLAEALVAQS.

This is an uncharacterized protein from Caenorhabditis elegans.